The sequence spans 61 residues: Small ribosomal subunit protein uS14B (61 aa).

Cysteine 24, cysteine 27, cysteine 40, and cysteine 43 together coordinate Zn(2+).

This sequence belongs to the universal ribosomal protein uS14 family. Zinc-binding uS14 subfamily. Part of the 30S ribosomal subunit. Contacts proteins S3 and S10. The cofactor is Zn(2+).

Functionally, binds 16S rRNA, required for the assembly of 30S particles and may also be responsible for determining the conformation of the 16S rRNA at the A site. The chain is Small ribosomal subunit protein uS14B from Lactiplantibacillus plantarum (strain ATCC BAA-793 / NCIMB 8826 / WCFS1) (Lactobacillus plantarum).